Consider the following 219-residue polypeptide: MNQLEMKKLAAQAALEYVTADTIVGVGSGSTVNCFIEALGTIKNKIQGVVAASKASEELLRKQGIEVFNANDVSSLDIYVDGADEINPQKMMIKGGGAALTREKIVAALAKKFICIVDSSKQVDVLGSTFPLPVEVIPMARSQVGRKLVALGGAPEYREGVVTDNGNVILDVHNFSILNPVEMEKELNNVAGVVTNGIFALRGADVVIVGTPEGAKIID.

Residues 28–31, 81–84, and 94–97 each bind substrate; these read SGST, DGAD, and KGGG. The active-site Proton acceptor is glutamate 103. Residue lysine 121 coordinates substrate.

The protein belongs to the ribose 5-phosphate isomerase family. In terms of assembly, homodimer.

The catalysed reaction is aldehydo-D-ribose 5-phosphate = D-ribulose 5-phosphate. Its pathway is carbohydrate degradation; pentose phosphate pathway; D-ribose 5-phosphate from D-ribulose 5-phosphate (non-oxidative stage): step 1/1. In terms of biological role, catalyzes the reversible conversion of ribose-5-phosphate to ribulose 5-phosphate. This is Ribose-5-phosphate isomerase A from Haemophilus influenzae (strain 86-028NP).